The chain runs to 24 residues: Major pollen allergen Ole e 4 (24 aa).

Belongs to the glycosyl hydrolase 17 family. The N-terminus is blocked.

This chain is Major pollen allergen Ole e 4, found in Olea europaea (Common olive).